The following is a 663-amino-acid chain: Ankyrin repeat and SAM domain-containing protein 3 (663 aa).

Residues 1-421 (MSELSDEASE…PGSEPQAEKS (421 aa)) form an interaction with NEK7 region. Phosphoserine occurs at positions 2 and 5. 6 ANK repeats span residues 34–64 (DVPL…DLNK), 68–97 (GGWT…SVNV), 101–130 (EGQT…ELEM), 134–163 (QGWT…NANV), 168–197 (YGFT…KVDT), and 201–220 (SGAT…IVAL). Asparagine 96 bears the 3-hydroxyasparagine mark. Phosphoserine is present on residues serine 201, serine 225, serine 243, serine 244, and serine 245. 2 disordered regions span residues 242–261 (LSSS…CRKK) and 278–425 (TGLG…PYSG). A Phosphothreonine modification is found at threonine 318. The residue at position 319 (serine 319) is a Phosphoserine. The segment covering 322–337 (NERDVESSSSSSREEP) has biased composition (basic and acidic residues). Phosphoserine is present on residues serine 366, serine 369, and serine 373. Residues 378–395 (KSSVRKQTRTYLKNKSRH) show a composition bias toward basic residues. The SAM domain occupies 424–487 (SGPQDLATLL…TSAIARWHSS (64 aa)). Positions 500 to 575 (ADRLEAEMQE…AALVLDQLRA (76 aa)) form a coiled coil. Serine 540 is modified (phosphoserine). 2 disordered regions span residues 585 to 604 (KQHH…PADS) and 637 to 663 (AEPG…SDVG). Residues 641 to 651 (ETTDAEWEEME) are compositionally biased toward acidic residues. The span at 654-663 (IARRDDSDVG) shows a compositional bias: basic and acidic residues.

In terms of assembly, homooligomer. Interacts (via SAM domain) with ANKS6 (via SAM domain). Interacts with BICC1. Interacts with NPHP1. Interacts with NEK8. Interacts with HIF1AN. Interacts with NEK7; this interaction alters the subcellular distribution of NEK7 by preventing its nuclear translocation. Post-translationally, hydroxylated at Asn-96, most probably by HIF1AN. In terms of processing, phosphorylations at Ser-5, Ser-225, Thr-318, Ser-319, Ser-366 and Ser-369 occur in a NEK7-dependent manner. Polyubiquitinated.

The protein localises to the cell projection. The protein resides in the cilium. It localises to the cytoplasm. Its function is as follows. May be involved in vasopressin signaling in the kidney. The sequence is that of Ankyrin repeat and SAM domain-containing protein 3 (Anks3) from Rattus norvegicus (Rat).